The chain runs to 157 residues: MADNARAKRLADLIREVVAQKLQRGIKDPRLGSQVTITDTRVTGDLREATVFYTVYGDDEERAAAAAGLESAKGVLRSAVGAAAGVKFTPTLTFVADALPDTAKTIEDLLDKARASDAKVREVSAGAQFAGDADPYRKPESDDESDTAAKTDGDAAE.

A disordered region spans residues Ser-124–Glu-157. Residues Thr-147–Glu-157 show a composition bias toward basic and acidic residues.

It belongs to the RbfA family. In terms of assembly, monomer. Binds 30S ribosomal subunits, but not 50S ribosomal subunits or 70S ribosomes.

It localises to the cytoplasm. Functionally, one of several proteins that assist in the late maturation steps of the functional core of the 30S ribosomal subunit. Associates with free 30S ribosomal subunits (but not with 30S subunits that are part of 70S ribosomes or polysomes). Required for efficient processing of 16S rRNA. May interact with the 5'-terminal helix region of 16S rRNA. The chain is Ribosome-binding factor A from Streptomyces avermitilis (strain ATCC 31267 / DSM 46492 / JCM 5070 / NBRC 14893 / NCIMB 12804 / NRRL 8165 / MA-4680).